The chain runs to 363 residues: MTSEQALLVLGIETTCDETAAAVVERRADGSGRLLSNIVRSQTDEHAPFGGVVPEIAARAHVDVLDGIIAAAMNEAGVAFASLSGVAAAAGPGLIGGVIVGLTTAKAIALVHGTPLIAVNHLEAHALTPRLTDAVEFPYCLFLASGGHTQIVAVLGVGNYVRLGTTVDDAIGEAFDKIAKMLGLPYPGGPQVERAAEAGDPNRFAFPRPMLGRQDANFSLSGLKTAVRNEAGKLTPLDPQDINDLCAGFQAAVLESVADRLGAGLRLFKERFGPPKALVAAGGAAANQAIRRMLREVAAKVQTTLIVPPPSLCTDNGAMIAWAGAERLALGLTDTMDTAPRARWLLDANATAPAKFANTRAGF.

Residues His-121 and His-125 each contribute to the Fe cation site. Residues 143–147 (LASGG), Asp-176, Gly-189, and Asn-287 each bind substrate. Residue Asp-315 coordinates Fe cation.

This sequence belongs to the KAE1 / TsaD family. It depends on Fe(2+) as a cofactor.

The protein localises to the cytoplasm. The catalysed reaction is L-threonylcarbamoyladenylate + adenosine(37) in tRNA = N(6)-L-threonylcarbamoyladenosine(37) in tRNA + AMP + H(+). Required for the formation of a threonylcarbamoyl group on adenosine at position 37 (t(6)A37) in tRNAs that read codons beginning with adenine. Is involved in the transfer of the threonylcarbamoyl moiety of threonylcarbamoyl-AMP (TC-AMP) to the N6 group of A37, together with TsaE and TsaB. TsaD likely plays a direct catalytic role in this reaction. The sequence is that of tRNA N6-adenosine threonylcarbamoyltransferase from Rhodopseudomonas palustris (strain TIE-1).